The chain runs to 121 residues: Basic phospholipase A2 homolog textilotoxin B chain (121 aa).

7 disulfides stabilise this stretch: Cys-11/Cys-72, Cys-27/Cys-120, Cys-29/Cys-45, Cys-44/Cys-101, Cys-51/Cys-94, Cys-61/Cys-87, and Cys-80/Cys-92.

This sequence belongs to the phospholipase A2 family. Group I subfamily. N49 sub-subfamily. Heterohexamer. 2 forms exist: 2 A or 2 B chains, 2 C chains and 2 covalently-linked D chains, and 1 A or 1 B, 1 C, 2 covalently-linked D chains and 2 differentially glycosylated covalently-linked D chains. Textilotoxin was originally described as pentameric. In terms of tissue distribution, expressed by the venom gland.

The protein localises to the secreted. Its function is as follows. Snake venom oligomeric phospholipase A2 that has potent presynaptic neurotoxicity. Chain B is not itself neurotoxic, but it is essential for the neurotoxicity of textilotoxin. Subunit B possesses a very low phospholipase activity. In Pseudonaja textilis (Eastern brown snake), this protein is Basic phospholipase A2 homolog textilotoxin B chain.